A 233-amino-acid chain; its full sequence is Homeobox protein ceh-30 (233 aa).

A compositionally biased stretch (polar residues) spans 50-85 (NNSTYSHDLDPSPQSVRSDLSTSPRASSPDRNSPMS). Disordered stretches follow at residues 50 to 93 (NNST…KART) and 206 to 233 (FQATSSSNSPSTHKSSESPQLDVSSNSD). The homeobox DNA-binding region spans 88–147 (SRKARTIFTDKQLQELENTFEKQKYLSVQDRMDLAHRMGLSDTQVKTWYQNRRTKWKRQA). Residues 224-233 (PQLDVSSNSD) show a composition bias toward polar residues.

It localises to the nucleus. Its function is as follows. Cell-type specific anti-apoptotic transcription factor required for the sexually dimorphic survival of the male-specific CEM (cephalic male) sensory neurons during sex determination. In hermaphrodites, the homologous cells undergo programmed cell death due to transcriptional repression of ceh-30 by tra-1, the terminal regulator in the sex determination pathway. The sequence is that of Homeobox protein ceh-30 from Caenorhabditis briggsae.